Reading from the N-terminus, the 356-residue chain is Leucine-rich repeat and transmembrane domain-containing protein 1 (356 aa).

The signal sequence occupies residues methionine 1–serine 32. In terms of domain architecture, LRRNT spans cysteine 33–proline 62. Residues cysteine 33–threonine 299 are Extracellular-facing. LRR repeat units follow at residues tryptophan 63–serine 84, leucine 87–glycine 108, histidine 111–alanine 132, glycine 135–proline 156, and asparagine 159–alanine 180. Asparagine 92 and asparagine 116 each carry an N-linked (GlcNAc...) asparagine glycan. N-linked (GlcNAc...) asparagine glycosylation occurs at asparagine 159. The LRRCT domain maps to asparagine 192–leucine 246. A compositionally biased stretch (polar residues) spans leucine 255 to glutamine 277. Residues leucine 255 to proline 288 form a disordered region. Residues valine 300 to tyrosine 320 traverse the membrane as a helical segment. The Cytoplasmic segment spans residues glycine 321–alanine 356.

The protein resides in the membrane. This is Leucine-rich repeat and transmembrane domain-containing protein 1 (Lrtm1) from Mus musculus (Mouse).